The chain runs to 261 residues: Probable glutathione-independent glyoxalase hsp3103 (261 aa).

Residues Cys162, His163, and Glu196 contribute to the active site.

It belongs to the peptidase C56 family. HSP31-like subfamily.

It carries out the reaction methylglyoxal + H2O = (R)-lactate + H(+). Its function is as follows. Catalyzes the conversion of methylglyoxal (MG) to D-lactate in a single glutathione (GSH)-independent step. May play a role in detoxifying endogenously produced glyoxals. Involved in protection against reactive oxygen species (ROS). This Schizosaccharomyces pombe (strain 972 / ATCC 24843) (Fission yeast) protein is Probable glutathione-independent glyoxalase hsp3103.